The following is a 335-amino-acid chain: UPF0353 protein Mjls_2492 (335 aa).

2 helical membrane-spanning segments follow: residues 18–38 (WFFL…IVAL) and 67–87 (LPAI…AGPT). A VWFA domain is found at 98-294 (VVMLVIDVSQ…EQLREVYANL (197 aa)). A helical membrane pass occupies residues 309–329 (VGWLRLGALVLALSALAALLL).

Belongs to the UPF0353 family.

It localises to the cell membrane. In Mycobacterium sp. (strain JLS), this protein is UPF0353 protein Mjls_2492.